A 135-amino-acid polypeptide reads, in one-letter code: Race-specific elicitor A4 (135 aa).

The signal sequence occupies residues 1 to 18; that stretch reads MHYTTLLLSTLLVGTALA. Positions 19–29 are excised as a propeptide; the sequence is QPTNPPAKTPK. The disordered stretch occupies residues 19-39; the sequence is QPTNPPAKTPKKAPKTQPYNP. The Chitin-binding type-2 domain occupies 47 to 111; sequence DTKCMGPKDC…DYPNLSTCPV (65 aa). The cysteines at positions 86 and 101 are disulfide-linked. The interval 112–135 is disordered; that stretch reads KTPQPKPKKGGVGGKKASVGHPGY.

In terms of biological role, this necrosis-inducing peptide induces a hypersensitive response on Cf-4 tomato genotypes. Race-specific elicitors are compounds which only induce defense responses in genotypes of host plants which are resistant to the pathogenic race that produces the elicitor, but not in susceptible genotypes. The protein is Race-specific elicitor A4 (AVR4) of Passalora fulva (Tomato leaf mold).